We begin with the raw amino-acid sequence, 145 residues long: 3-dehydroquinate dehydratase (145 aa).

Tyr22 (proton acceptor) is an active-site residue. Asn71, His77, and Asp84 together coordinate substrate. The active-site Proton donor is the His97. Substrate is bound by residues 98–99 (LS) and Arg108.

It belongs to the type-II 3-dehydroquinase family. As to quaternary structure, homododecamer.

The catalysed reaction is 3-dehydroquinate = 3-dehydroshikimate + H2O. It functions in the pathway metabolic intermediate biosynthesis; chorismate biosynthesis; chorismate from D-erythrose 4-phosphate and phosphoenolpyruvate: step 3/7. Functionally, catalyzes a trans-dehydration via an enolate intermediate. The protein is 3-dehydroquinate dehydratase of Francisella philomiragia subsp. philomiragia (strain ATCC 25017 / CCUG 19701 / FSC 153 / O#319-036).